The primary structure comprises 1204 residues: ATP-dependent helicase/nuclease subunit A (1204 aa).

The 471-residue stretch at 2–472 (PQFTKEQEKA…ILLSDNFRST (471 aa)) folds into the UvrD-like helicase ATP-binding domain. Residue 23–30 (ASAGSGKT) coordinates ATP. Residues 500 to 783 (GQLIFGAKYY…RLMTIHGSKG (284 aa)) enclose the UvrD-like helicase C-terminal domain.

The protein belongs to the helicase family. AddA subfamily. In terms of assembly, heterodimer of AddA and AddB/RexB. Requires Mg(2+) as cofactor.

It carries out the reaction Couples ATP hydrolysis with the unwinding of duplex DNA by translocating in the 3'-5' direction.. It catalyses the reaction ATP + H2O = ADP + phosphate + H(+). Functionally, the heterodimer acts as both an ATP-dependent DNA helicase and an ATP-dependent, dual-direction single-stranded exonuclease. Recognizes the chi site generating a DNA molecule suitable for the initiation of homologous recombination. The AddA nuclease domain is required for chi fragment generation; this subunit has the helicase and 3' -&gt; 5' nuclease activities. The polypeptide is ATP-dependent helicase/nuclease subunit A (Lactobacillus helveticus (strain DPC 4571)).